Reading from the N-terminus, the 1238-residue chain is DNA-directed RNA polymerase subunit beta (1238 aa).

Residues E1187–I1238 form a disordered region. Over residues P1193–I1238 the composition is skewed to acidic residues.

The protein belongs to the RNA polymerase beta chain family. In terms of assembly, the RNAP catalytic core consists of 2 alpha, 1 beta, 1 beta' and 1 omega subunit. When a sigma factor is associated with the core the holoenzyme is formed, which can initiate transcription.

The enzyme catalyses RNA(n) + a ribonucleoside 5'-triphosphate = RNA(n+1) + diphosphate. Its function is as follows. DNA-dependent RNA polymerase catalyzes the transcription of DNA into RNA using the four ribonucleoside triphosphates as substrates. This is DNA-directed RNA polymerase subunit beta from Thermoanaerobacter pseudethanolicus (strain ATCC 33223 / 39E) (Clostridium thermohydrosulfuricum).